The following is a 161-amino-acid chain: Ribosome maturation factor RimP (161 aa).

This sequence belongs to the RimP family.

The protein resides in the cytoplasm. Functionally, required for maturation of 30S ribosomal subunits. In Rickettsia rickettsii (strain Iowa), this protein is Ribosome maturation factor RimP.